The sequence spans 199 residues: NAD(P)H dehydrogenase (quinone) (199 aa).

One can recognise a Flavodoxin-like domain in the interval 4-190 (VLVLYYSSYG…EGARHQGELV (187 aa)). FMN-binding positions include 10–15 (SSYGHI) and 78–80 (TRY). Tyr-12 provides a ligand contact to NAD(+). Position 98 (Trp-98) interacts with substrate. Residues 113-119 (STATQHG) and His-134 contribute to the FMN site.

Belongs to the WrbA family. FMN is required as a cofactor.

It catalyses the reaction a quinone + NADH + H(+) = a quinol + NAD(+). It carries out the reaction a quinone + NADPH + H(+) = a quinol + NADP(+). The chain is NAD(P)H dehydrogenase (quinone) from Paraburkholderia phymatum (strain DSM 17167 / CIP 108236 / LMG 21445 / STM815) (Burkholderia phymatum).